The chain runs to 142 residues: Large ribosomal subunit protein uL13 (142 aa).

The protein belongs to the universal ribosomal protein uL13 family. Part of the 50S ribosomal subunit.

Functionally, this protein is one of the early assembly proteins of the 50S ribosomal subunit, although it is not seen to bind rRNA by itself. It is important during the early stages of 50S assembly. In Opitutus terrae (strain DSM 11246 / JCM 15787 / PB90-1), this protein is Large ribosomal subunit protein uL13.